Here is a 218-residue protein sequence, read N- to C-terminus: Tegument protein UL51 homolog (218 aa).

A lipid anchor (S-palmitoyl cysteine; by host) is attached at cysteine 11. The disordered stretch occupies residues 199–218; it reads APPPVVRQPEHSGPTELALT.

Belongs to the herpesviridae UL51 family. As to quaternary structure, homodimer. Interacts with BBRF2; the BBRF2-BSRF1 complexes oligomerize which might play a role in tethering the viral nucleocapsids to the host Golgi membrane during secondary envelopment. Interacts with BGLF3.5. Interacts with BALF1. Interacts with glycoprotein gB. Interacts with glycoprotein heterodimer gH/gL. Post-translationally, phosphorylated. In terms of processing, palmitoylation is necessary for Golgi localization.

The protein resides in the host cytoplasm. It is found in the virion. Its subcellular location is the host Golgi apparatus. In terms of biological role, plays several roles during the time course of infection, including egress of virus particles from the perinuclear space and secondary envelopment of cytoplasmic capsids that bud into specific trans-Golgi network (TGN)-derived membranes. The polypeptide is Tegument protein UL51 homolog (Homo sapiens (Human)).